The sequence spans 163 residues: SsrA-binding protein (163 aa).

This sequence belongs to the SmpB family.

It is found in the cytoplasm. Its function is as follows. Required for rescue of stalled ribosomes mediated by trans-translation. Binds to transfer-messenger RNA (tmRNA), required for stable association of tmRNA with ribosomes. tmRNA and SmpB together mimic tRNA shape, replacing the anticodon stem-loop with SmpB. tmRNA is encoded by the ssrA gene; the 2 termini fold to resemble tRNA(Ala) and it encodes a 'tag peptide', a short internal open reading frame. During trans-translation Ala-aminoacylated tmRNA acts like a tRNA, entering the A-site of stalled ribosomes, displacing the stalled mRNA. The ribosome then switches to translate the ORF on the tmRNA; the nascent peptide is terminated with the 'tag peptide' encoded by the tmRNA and targeted for degradation. The ribosome is freed to recommence translation, which seems to be the essential function of trans-translation. In Buchnera aphidicola subsp. Schizaphis graminum (strain Sg), this protein is SsrA-binding protein.